The primary structure comprises 184 residues: Interferon alpha-2 (184 aa).

Residues 1 to 23 (MALPFSLLMALVVLSCHSSCSLG) form the signal peptide. Disulfide bonds link Cys24–Cys122 and Cys52–Cys162.

The protein belongs to the alpha/beta interferon family. Interacts with IFNAR2.

It is found in the secreted. Functionally, produced by macrophages, IFN-alpha have antiviral activities. This chain is Interferon alpha-2, found in Equus caballus (Horse).